Reading from the N-terminus, the 972-residue chain is 116 kDa U5 small nuclear ribonucleoprotein component (972 aa).

M1 carries the post-translational modification N-acetylmethionine. The disordered stretch occupies residues 1–54; sequence MDTDLYDEFGNYIGPELDSDEDDDELGRETKDLDEMDDDDDDDDIGDHDDDHPG. Acidic residues-rich tracts occupy residues 17–26 and 34–48; these read LDSDEDDDEL and DEMDDDDDDDDIGDH. S19 is subject to Phosphoserine. A Glycyl lysine isopeptide (Lys-Gly) (interchain with G-Cter in SUMO1); alternate cross-link involves residue K64. Residue K64 forms a Glycyl lysine isopeptide (Lys-Gly) (interchain with G-Cter in SUMO2); alternate linkage. Phosphothreonine is present on T86. One can recognise a tr-type G domain in the interval 127–409; the sequence is ELIRNVTLCG…GIHLTKEELK (283 aa). Residues 136–143, 204–208, and 258–261 contribute to the GTP site; these read GHLHHGKT, DTPGH, and NKID.

It belongs to the TRAFAC class translation factor GTPase superfamily. Classic translation factor GTPase family. EF-G/EF-2 subfamily. Component of the U5 snRNP and the U4/U6-U5 tri-snRNP complex, a building block of the spliceosome. The U4/U6-U5 tri-snRNP complex is composed of the U4, U6 and U5 snRNAs and at least PRPF3, PRPF4, PRPF6, PRPF8, PRPF31, SNRNP200, TXNL4A, SNRNP40, DDX23, CD2BP2, PPIH, SNU13, EFTUD2, SART1 and USP39. Component of the pre-catalytic, catalytic and post-catalytic spliceosome complexes. Component of the minor spliceosome, which splices U12-type introns. Within this complex, interacts with CRIPT. Interacts with ERBB4 and PRPF8. Interacts with PIH1D1. Interacts with RPAP3 and URI1 in a ZNHIT2-dependent manner. Interacts with NRDE2. Interacts with FAM50A. Interacts with UBL5.

It localises to the nucleus. In terms of biological role, required for pre-mRNA splicing as component of the spliceosome, including pre-catalytic, catalytic and post-catalytic spliceosomal complexes. Component of the U5 snRNP and the U4/U6-U5 tri-snRNP complex, a building block of the spliceosome. As a component of the minor spliceosome, involved in the splicing of U12-type introns in pre-mRNAs. The chain is 116 kDa U5 small nuclear ribonucleoprotein component (EFTUD2) from Pongo abelii (Sumatran orangutan).